The following is a 201-amino-acid chain: Recombination protein RecR (201 aa).

Residues 60 to 75 (CSCCGNVDTIDPCTVC) form a C4-type zinc finger. In terms of domain architecture, Toprim spans 83–178 (SMIIVVEDVS…KTTRLAHGVP (96 aa)).

It belongs to the RecR family.

Functionally, may play a role in DNA repair. It seems to be involved in an RecBC-independent recombinational process of DNA repair. It may act with RecF and RecO. This Allorhizobium ampelinum (strain ATCC BAA-846 / DSM 112012 / S4) (Agrobacterium vitis (strain S4)) protein is Recombination protein RecR.